We begin with the raw amino-acid sequence, 177 residues long: NPCCDAATCKLKSGSQCGHGDCCEQCKFSKSGTECRASMSECDPAEHCTGQSSECPADVFHKNGQPCLDNYGYCYNGNCPIMYHQCYDLFGADVYEAEDSCFERNQKGNYYGYCRKENGNKIPCAPEDVKCGRLYCKDNSPGQNNPCKMFYSNEDEHKGMVLPGTKCADGKVCSNRQ.

Residues 1–63 (NPCCDAATCK…ECPADVFHKN (63 aa)) form the Disintegrin domain. 10 cysteine pairs are disulfide-bonded: cysteine 3/cysteine 26, cysteine 17/cysteine 23, cysteine 22/cysteine 48, cysteine 35/cysteine 55, cysteine 42/cysteine 74, cysteine 67/cysteine 79, cysteine 86/cysteine 136, cysteine 101/cysteine 147, cysteine 114/cysteine 124, and cysteine 131/cysteine 173. The short motif at 41 to 43 (ECD) is the D/ECD-tripeptide element. Positions 43, 44, 46, 58, and 59 each coordinate Ca(2+).

Belongs to the venom metalloproteinase (M12B) family. P-III subfamily. P-IIIa sub-subfamily. Monomer. Zn(2+) is required as a cofactor. In terms of processing, glycosylated. Expressed by the venom gland.

The protein localises to the secreted. Functionally, snake venom metalloproteinase that impairs hemostasis in the envenomed animal. This is Zinc metalloproteinase-disintegrin-like scutiarin from Crotalus scutulatus scutulatus (Mojave rattlesnake).